A 610-amino-acid polypeptide reads, in one-letter code: DNA mismatch repair protein MutL (610 aa).

This sequence belongs to the DNA mismatch repair MutL/HexB family.

Its function is as follows. This protein is involved in the repair of mismatches in DNA. It is required for dam-dependent methyl-directed DNA mismatch repair. May act as a 'molecular matchmaker', a protein that promotes the formation of a stable complex between two or more DNA-binding proteins in an ATP-dependent manner without itself being part of a final effector complex. In Rickettsia africae (strain ESF-5), this protein is DNA mismatch repair protein MutL.